The following is a 406-amino-acid chain: Immediate early response gene 5-like protein (406 aa).

2 disordered regions span residues 166-195 and 216-235; these read QPPH…APAA and AAPS…PSSS. Over residues 182–193 the composition is skewed to pro residues; it reads QPGPAPLPPPAP.

This sequence belongs to the IER family.

This is Immediate early response gene 5-like protein (Ier5l) from Mus musculus (Mouse).